The primary structure comprises 444 residues: Phosphoglucosamine mutase (444 aa).

Serine 102 (phosphoserine intermediate) is an active-site residue. Serine 102, aspartate 241, aspartate 243, and aspartate 245 together coordinate Mg(2+). A Phosphoserine modification is found at serine 102.

The protein belongs to the phosphohexose mutase family. It depends on Mg(2+) as a cofactor. Post-translationally, activated by phosphorylation.

The enzyme catalyses alpha-D-glucosamine 1-phosphate = D-glucosamine 6-phosphate. Functionally, catalyzes the conversion of glucosamine-6-phosphate to glucosamine-1-phosphate. The chain is Phosphoglucosamine mutase from Acidovorax sp. (strain JS42).